Here is a 249-residue protein sequence, read N- to C-terminus: MFSNIDQTAVAALLRGQGCANSLKRLLENHKLSSDSTEPLIYTILNSFSLALSFVDPPSLLPHNESSLQNMTSHVLQRSSKKKYYGAEDLEYYRDESPTPRPDDGFTWRKYGQKTIKTSPYQRCYYRCTYAKDQNCNARKRVQMIQDNPPVYRTTYLGKHVCKAVAVHDDTYGSEMIKFDQVVSESVMPQLATIDEQAITMEDEAIDHIMNQECDINDFSVDDDPFWASQFPPFSSEDIMFFDNIANLD.

Positions 97-165 form a DNA-binding region, WRKY; the sequence is SPTPRPDDGF…YLGKHVCKAV (69 aa).

This sequence belongs to the WRKY group III family.

It localises to the nucleus. In terms of biological role, transcription factor. Interacts specifically with the W box (5'-(T)TGAC[CT]-3'), a frequently occurring elicitor-responsive cis-acting element. This chain is Probable WRKY transcription factor 64 (WRKY64), found in Arabidopsis thaliana (Mouse-ear cress).